The chain runs to 141 residues: Hemoglobin subunit beta (141 aa).

The Globin domain occupies 2-141 (HWSEVELHEI…VVDAISKEYH (140 aa)). Positions 58 and 87 each coordinate heme b.

This sequence belongs to the globin family. As to quaternary structure, heterotetramer of two alpha chains and two beta chains. Red blood cells.

Functionally, involved in oxygen transport from the lung to the various peripheral tissues. This chain is Hemoglobin subunit beta (HBB), found in Heterodontus portusjacksoni (Port Jackson shark).